Here is a 500-residue protein sequence, read N- to C-terminus: Na(+)/H(+) antiporter NhaB (500 aa).

The next 12 helical transmembrane spans lie at 34–54 (LLLA…QFIF), 58–78 (MALK…ALLL), 96–116 (VILL…LLLF), 129–149 (AVLS…LDAL), 150–170 (TVTA…HRVA), 205–225 (LLMH…VGEP), 241–261 (FFLK…VTCV), 311–331 (ILIV…LMVI), 350–370 (FQDA…VAVI), 394–414 (MLYL…VATI), 450–470 (ATPN…APLI), and 477–497 (MVWM…WAVT).

This sequence belongs to the NhaB Na(+)/H(+) (TC 2.A.34) antiporter family.

The protein resides in the cell inner membrane. It carries out the reaction 2 Na(+)(in) + 3 H(+)(out) = 2 Na(+)(out) + 3 H(+)(in). In terms of biological role, na(+)/H(+) antiporter that extrudes sodium in exchange for external protons. The sequence is that of Na(+)/H(+) antiporter NhaB from Pseudomonas entomophila (strain L48).